A 215-amino-acid polypeptide reads, in one-letter code: ATP-dependent dethiobiotin synthetase BioD (215 aa).

13–18 (DIGKTV) contributes to the ATP binding site. A Mg(2+)-binding site is contributed by Thr17. Residue Lys38 is part of the active site. Substrate is bound at residue Thr42. Residues Asp50, 115–118 (EGAG), and 175–176 (NH) contribute to the ATP site. Mg(2+)-binding residues include Asp50 and Glu115.

It belongs to the dethiobiotin synthetase family. Homodimer. Requires Mg(2+) as cofactor.

The protein resides in the cytoplasm. The catalysed reaction is (7R,8S)-7,8-diammoniononanoate + CO2 + ATP = (4R,5S)-dethiobiotin + ADP + phosphate + 3 H(+). It participates in cofactor biosynthesis; biotin biosynthesis; biotin from 7,8-diaminononanoate: step 1/2. In terms of biological role, catalyzes a mechanistically unusual reaction, the ATP-dependent insertion of CO2 between the N7 and N8 nitrogen atoms of 7,8-diaminopelargonic acid (DAPA, also called 7,8-diammoniononanoate) to form a ureido ring. The protein is ATP-dependent dethiobiotin synthetase BioD of Neisseria meningitidis serogroup B (strain ATCC BAA-335 / MC58).